Here is a 586-residue protein sequence, read N- to C-terminus: Probable transporter AQR1 (586 aa).

Disordered regions lie at residues 1 to 44 (MSRS…FEGA) and 61 to 82 (EGDL…PTQQ). Over 1 to 99 (MSRSNSIYTE…PYTLLSYGQK (99 aa)) the chain is Extracellular. Over residues 19–40 (NEQHLTREYTKPDGQTKSEKLN) the composition is skewed to basic and acidic residues. The chain crosses the membrane as a helical span at residues 100–120 (WGMVAILTMCGFWSSLGSPIY). Residues 121 to 139 (YPALRQLEKQFNVDENMVN) are Cytoplasmic-facing. The helical transmembrane segment at 140–160 (VTVVVYLLFQGISPTVSGGLA) threads the bilayer. At 161–166 (DCFGRR) the chain is on the extracellular side. A helical membrane pass occupies residues 167 to 187 (PIILAGMLIYVIASIGLACAP). Residue serine 188 is a topological domain, cytoplasmic. The helical transmembrane segment at 189-209 (YGVIIFLRCIQSIGISPTIAI) threads the bilayer. Over 210–225 (SSGVVGDFTLKHERGT) the chain is Extracellular. The helical transmembrane segment at 226–246 (FVGATSGFVLLGQCFGSLIGA) threads the bilayer. Residues 247 to 255 (VLTARWDWR) lie on the Cytoplasmic side of the membrane. Residues 256-276 (AIFWFLTIGCGSCFLIAFLIL) form a helical membrane-spanning segment. The Extracellular segment spans residues 277–334 (PETKRTIAGNLSIKPKRFINRAPIFLLGPVRRRFKYDNPDYETLDPTIPKLDLSSAGK). The helical transmembrane segment at 335-355 (ILVLPEIILSLFPSGLLFAMW) threads the bilayer. At 356-374 (TLMLSSISSGLSVAPYNYH) the chain is on the cytoplasmic side. The helical transmembrane segment at 375 to 395 (LVIIGVCYLPGGIGGLMGSFF) threads the bilayer. Over 396–433 (TGRIIDMYFKRKIKKFEQDKANGLIPQDAEINMFKVRL) the chain is Extracellular. Residues 434-454 (VCLLPQNFLAVVAYLLFGWSI) traverse the membrane as a helical segment. Residues 455–459 (DKGWR) are Cytoplasmic-facing. The chain crosses the membrane as a helical span at residues 460-480 (IESILITSFVCSYCAMSTLST). Residues 481-523 (STTLLVDLYPTKSSTASSCFNFVRCSLSTIFMGCFAKMKAAMT) lie on the Extracellular side of the membrane. Residues 524–544 (VGGTFTFLCALVFFFNFLMFI) form a helical membrane-spanning segment. Residues 545–586 (PMKYGMKWREDRLLKQQRQSWLNTLAVKAKKGTKRDQNDNHN) are Cytoplasmic-facing.

This sequence belongs to the major facilitator superfamily. CAR1 family.

Its subcellular location is the membrane. Its function is as follows. Probable transporter that confers resistance to short-chain monocarboxylic acids and quinidine. This is Probable transporter AQR1 (AQR1) from Saccharomyces cerevisiae (strain ATCC 204508 / S288c) (Baker's yeast).